The primary structure comprises 290 residues: 4-diphosphocytidyl-2-C-methyl-D-erythritol kinase (290 aa).

Residue K10 is part of the active site. 95 to 105 (PVAAGLAGGSS) contributes to the ATP binding site. The active site involves D137.

Belongs to the GHMP kinase family. IspE subfamily.

It catalyses the reaction 4-CDP-2-C-methyl-D-erythritol + ATP = 4-CDP-2-C-methyl-D-erythritol 2-phosphate + ADP + H(+). The protein operates within isoprenoid biosynthesis; isopentenyl diphosphate biosynthesis via DXP pathway; isopentenyl diphosphate from 1-deoxy-D-xylulose 5-phosphate: step 3/6. Its function is as follows. Catalyzes the phosphorylation of the position 2 hydroxy group of 4-diphosphocytidyl-2C-methyl-D-erythritol. This Geobacillus thermodenitrificans (strain NG80-2) protein is 4-diphosphocytidyl-2-C-methyl-D-erythritol kinase.